Here is a 48-residue protein sequence, read N- to C-terminus: GIFPKIIGKGIKTGIVNGIKSLVKGVGMKVFKAGLNNIGNTGCNEDEC.

A disulfide bond links C43 and C48.

In terms of tissue distribution, expressed by the skin glands.

The protein localises to the secreted. Antimicrobial activity against Gram-negative bacterium E.coli. This is Palustrin-3a from Lithobates palustris (Pickerel frog).